The chain runs to 399 residues: Nicotinate phosphoribosyltransferase (399 aa).

Phosphohistidine; by autocatalysis is present on His217.

This sequence belongs to the NAPRTase family. Transiently phosphorylated on a His residue during the reaction cycle. Phosphorylation strongly increases the affinity for substrates and increases the rate of nicotinate D-ribonucleotide production. Dephosphorylation regenerates the low-affinity form of the enzyme, leading to product release.

It carries out the reaction nicotinate + 5-phospho-alpha-D-ribose 1-diphosphate + ATP + H2O = nicotinate beta-D-ribonucleotide + ADP + phosphate + diphosphate. Its pathway is cofactor biosynthesis; NAD(+) biosynthesis; nicotinate D-ribonucleotide from nicotinate: step 1/1. Its function is as follows. Catalyzes the synthesis of beta-nicotinate D-ribonucleotide from nicotinate and 5-phospho-D-ribose 1-phosphate at the expense of ATP. The polypeptide is Nicotinate phosphoribosyltransferase (Burkholderia cenocepacia (strain HI2424)).